Consider the following 92-residue polypeptide: Large ribosomal subunit protein eL43 (92 aa).

A C4-type zinc finger spans residues 39–60; it reads CSFCGKKAVKRGAAGIWNCSSC.

The protein belongs to the eukaryotic ribosomal protein eL43 family.

This chain is Large ribosomal subunit protein eL43 (RPL43), found in Eremothecium gossypii (strain ATCC 10895 / CBS 109.51 / FGSC 9923 / NRRL Y-1056) (Yeast).